The primary structure comprises 395 residues: Mitogen-activated protein kinase 6 (395 aa).

The interval Met1–Asn35 is disordered. The span at Ala17–Ser27 shows a compositional bias: low complexity. Residues Lys63–Leu348 enclose the Protein kinase domain. ATP-binding positions include Ile69–Val77 and Lys92. Asp189 serves as the catalytic Proton acceptor. Thr221 is subject to Phosphothreonine. A TXY motif is present at residues Thr221 to Tyr223. Phosphotyrosine is present on Tyr223. The residue at position 226 (Thr226) is a Phosphothreonine.

Belongs to the protein kinase superfamily. CMGC Ser/Thr protein kinase family. MAP kinase subfamily. As to quaternary structure, interacts with MEKK1, MKK1 and MKK2. May form a ternary complex with MEKK1 and MKK1 or MKK2. Interacts with NDPK2, AP2C1, MKP1 and PTP1. Interacts with DSPTP1B/MKP2, especially during HR-like responses triggered by fungal elicitors. Interacts with MKK4, MKK5 and MKK6. Binds to LIP5. Interacts with VQ4 and IKU1/VQ14. Interacts with RACK1A, RACK1B and RACK1C. Interacts with PTP1. Interacts with FLZ9. Binds to BASL and YDA. In terms of processing, dually phosphorylated on Thr-221 and Tyr-223, which activates the enzyme. Dephosphorylated by DSPTP1B/MKP2.

The protein localises to the cytoplasm. It is found in the nucleus. Its subcellular location is the cell cortex. It catalyses the reaction L-seryl-[protein] + ATP = O-phospho-L-seryl-[protein] + ADP + H(+). It carries out the reaction L-threonyl-[protein] + ATP = O-phospho-L-threonyl-[protein] + ADP + H(+). With respect to regulation, activated by threonine and tyrosine phosphorylation. Activated by the MAP kinase kinases MKK2, MKK3, MKK4, MKK5, MKK7 and MKK9. Activated in response to touch, wounding, low temperature, low humidity, salt stress, hydrogen peroxide, ozone, ACC (an ethylene precursor), jasmonic acid (JA), mastoparan and UVC. Activated in response to elicitors: oligogalacturonides, hexameric chitin fragments, fungal xylanase, and the bacterial flagellin and harpin. Activated upon Pseudomonas syringae pv. tomato DC3000 infection. Repressed by the protein phosphatase 2C AP2C1 and the protein-tyrosine-phosphatases MKP1 and PTP1. Repressed by DSPTP1B/MKP2-mediated dephosphorylation. Activated by polarized BASL. Triggered by MKKK20 in response to various abiotic stresses, including osmotic stress, cold and reactive oxygen species (ROS). Activated by MKK5 in response to abscisic acid (ABA). Mitogen-activated protein kinase (MAPK) which regulates abscisic acid (ABA) responses in a MAPKKK20-MKK5-MPK6 cascade involved in root growth (e.g. root cell division and elongation) and stomatal response. Involved in oxidative stress-mediated signaling cascade (such as ozone). Involved in the innate immune MAP kinase signaling cascade (MEKK1, MKK4/MKK5 and MPK3/MPK6) downstream of bacterial flagellin receptor FLS2. May be involved in hypersensitive response (HR)-mediated signaling cascade by modulating LIP5 phosphorylation and subsequent multivesicular bodies (MVBs) trafficking. May phosphorylate regulators of WRKY transcription factors. Phosphorylates 1-aminocyclopropane-1-carboxylic acid synthases (ACS2 and ACS6) and may be involved in the regulation of bacterial elicitor flagellin-induced ethylene production. Regulates locally gene-mediated and basal resistance response to certain pathogens. May be involved in the cold and salinity stress-mediated MAP kinase signaling cascade (MEKK1, MKK1/MKK2 and MPK4/MPK6). MKK1-MPK6 module mediates abscisic acid (ABA)-dependent CAT1 expression with H(2)O(2) production and response to drought and salt stress. MKK1-MPK6 module is also involved in sugar signaling during the process of seed germination. MKK3-MPK6 module plays an important role in the jasmonate signal transduction pathway through the negative regulation of MYC2/JIN1 expression. MKK9-MPK3/MPK6 module phosphorylates and activates EIN3, leading to the promotion of EIN3-mediated transcription in ethylene signaling. MPK3/MPK6 cascade regulates camalexin synthesis through transcriptional regulation of the biosynthetic genes after pathogen infection. MKK9-MPK6 module positively regulates leaf senescence. YDA-MKK4/MKK5-MPK3/MPK6 module regulates stomatal cell fate before the guard mother cell (GMC) is specified. When activated, reinforces the feedback loop by phosphorylating BASL, and inhibits stomatal fate by phosphorylating SPCH. This MAPK cascade also functions downstream of the ER receptor in regulating coordinated local cell proliferation, which shapes the morphology of plant organs. The sequence is that of Mitogen-activated protein kinase 6 from Arabidopsis thaliana (Mouse-ear cress).